A 166-amino-acid chain; its full sequence is MTRDFSKFEQNLTHLDSEGAVKMVDVSTKVQTIRQAEAAGQVRMLPETFEAIQRGNSPKGDVLGTAKLAGIMAAKQTAQLIPLCHPLPLQKIDIELIPDPHLPGYQIRAMVKTKAETGVEMEALTAVSVAALTLYDMAKALEKSISIELIRLLSKSGGKSGDYMVK.

Substrate contacts are provided by residues 83-85 (LCH) and 121-122 (ME). Residue D136 is part of the active site.

It belongs to the MoaC family. In terms of assembly, homohexamer; trimer of dimers.

It carries out the reaction (8S)-3',8-cyclo-7,8-dihydroguanosine 5'-triphosphate = cyclic pyranopterin phosphate + diphosphate. It participates in cofactor biosynthesis; molybdopterin biosynthesis. In terms of biological role, catalyzes the conversion of (8S)-3',8-cyclo-7,8-dihydroguanosine 5'-triphosphate to cyclic pyranopterin monophosphate (cPMP). The chain is Cyclic pyranopterin monophosphate synthase from Trichodesmium erythraeum (strain IMS101).